The chain runs to 272 residues: Formamidopyrimidine-DNA glycosylase (272 aa).

Proline 2 (schiff-base intermediate with DNA) is an active-site residue. Glutamate 3 serves as the catalytic Proton donor. Residue lysine 57 is the Proton donor; for beta-elimination activity of the active site. Residues histidine 90, arginine 109, and lysine 150 each contribute to the DNA site. The FPG-type zinc-finger motif lies at 235-269 (HVYGRAKKKCLLCSSIIQEEKIGQRNTFWCGHCQP). The active-site Proton donor; for delta-elimination activity is arginine 259.

Belongs to the FPG family. Monomer. It depends on Zn(2+) as a cofactor.

It carries out the reaction Hydrolysis of DNA containing ring-opened 7-methylguanine residues, releasing 2,6-diamino-4-hydroxy-5-(N-methyl)formamidopyrimidine.. The enzyme catalyses 2'-deoxyribonucleotide-(2'-deoxyribose 5'-phosphate)-2'-deoxyribonucleotide-DNA = a 3'-end 2'-deoxyribonucleotide-(2,3-dehydro-2,3-deoxyribose 5'-phosphate)-DNA + a 5'-end 5'-phospho-2'-deoxyribonucleoside-DNA + H(+). Involved in base excision repair of DNA damaged by oxidation or by mutagenic agents. Acts as a DNA glycosylase that recognizes and removes damaged bases. Has a preference for oxidized purines, such as 7,8-dihydro-8-oxoguanine (8-oxoG). Has AP (apurinic/apyrimidinic) lyase activity and introduces nicks in the DNA strand. Cleaves the DNA backbone by beta-delta elimination to generate a single-strand break at the site of the removed base with both 3'- and 5'-phosphates. The sequence is that of Formamidopyrimidine-DNA glycosylase from Aliivibrio fischeri (strain ATCC 700601 / ES114) (Vibrio fischeri).